Reading from the N-terminus, the 135-residue chain is NADPH-dependent 7-cyano-7-deazaguanine reductase (135 aa).

Residue Cys48 is the Thioimide intermediate of the active site. The Proton donor role is filled by Asp55. Residues 70 to 72 and 89 to 90 contribute to the substrate site; these read IEL and HE.

Belongs to the GTP cyclohydrolase I family. QueF type 1 subfamily.

The protein localises to the cytoplasm. The enzyme catalyses 7-aminomethyl-7-carbaguanine + 2 NADP(+) = 7-cyano-7-deazaguanine + 2 NADPH + 3 H(+). Its pathway is tRNA modification; tRNA-queuosine biosynthesis. In terms of biological role, catalyzes the NADPH-dependent reduction of 7-cyano-7-deazaguanine (preQ0) to 7-aminomethyl-7-deazaguanine (preQ1). The sequence is that of NADPH-dependent 7-cyano-7-deazaguanine reductase from Prochlorococcus marinus (strain MIT 9303).